The primary structure comprises 98 residues: NADH-ubiquinone oxidoreductase chain 4L (98 aa).

Helical transmembrane passes span Met-1–Ile-21, Thr-29–Leu-49, and Phe-59–Val-79.

Belongs to the complex I subunit 4L family. As to quaternary structure, core subunit of respiratory chain NADH dehydrogenase (Complex I) which is composed of 45 different subunits.

The protein localises to the mitochondrion inner membrane. It carries out the reaction a ubiquinone + NADH + 5 H(+)(in) = a ubiquinol + NAD(+) + 4 H(+)(out). Functionally, core subunit of the mitochondrial membrane respiratory chain NADH dehydrogenase (Complex I) which catalyzes electron transfer from NADH through the respiratory chain, using ubiquinone as an electron acceptor. Part of the enzyme membrane arm which is embedded in the lipid bilayer and involved in proton translocation. In Zaglossus bruijni (Western long-beaked echidna), this protein is NADH-ubiquinone oxidoreductase chain 4L (MT-ND4L).